The chain runs to 497 residues: NAD(P)H-quinone oxidoreductase subunit 2, chloroplastic (497 aa).

The next 14 membrane-spanning stretches (helical) occupy residues 13–33 (VILP…LDLI), 37–57 (SAWL…ALVF), 76–96 (FTIS…LIST), 103–123 (GMGL…GLFL), 129–149 (LVTV…LVGY), 164–184 (LLMG…LYGL), 206–226 (IAVW…LSAF), 240–260 (PTPV…ALAT), 274–294 (WHVL…LIAA), 311–331 (AGYL…GMIT), 332–352 (YMVT…LFGL), 373–393 (AFCL…AGFF), 406–426 (GLYL…YYYL), and 462–482 (VGIA…NPII).

It belongs to the complex I subunit 2 family. NDH is composed of at least 16 different subunits, 5 of which are encoded in the nucleus.

The protein localises to the plastid. Its subcellular location is the chloroplast thylakoid membrane. It catalyses the reaction a plastoquinone + NADH + (n+1) H(+)(in) = a plastoquinol + NAD(+) + n H(+)(out). The catalysed reaction is a plastoquinone + NADPH + (n+1) H(+)(in) = a plastoquinol + NADP(+) + n H(+)(out). Its function is as follows. NDH shuttles electrons from NAD(P)H:plastoquinone, via FMN and iron-sulfur (Fe-S) centers, to quinones in the photosynthetic chain and possibly in a chloroplast respiratory chain. The immediate electron acceptor for the enzyme in this species is believed to be plastoquinone. Couples the redox reaction to proton translocation, and thus conserves the redox energy in a proton gradient. In Zygnema circumcarinatum (Green alga), this protein is NAD(P)H-quinone oxidoreductase subunit 2, chloroplastic.